We begin with the raw amino-acid sequence, 383 residues long: Protein delta homolog 2 (383 aa).

The first 26 residues, 1 to 26 (MPSGCRCLHLVCLLCILAAPVKPVRA), serve as a signal peptide directing secretion. 4 consecutive EGF-like domains span residues 27-58 (DDCS…LHCE), 62-89 (RMPG…KFCD), 91-129 (DEHV…RDCE), and 131-172 (KEGP…AHCE). The Extracellular segment spans residues 27-306 (DDCSSHCDLA…RQEAGLGKSS (280 aa)). Disulfide bonds link C29-C40, C33-C46, C48-C57, C66-C71, C79-C88, C95-C107, C101-C117, C119-C128, C135-C148, C142-C160, C162-C171, C178-C189, C183-C198, C200-C209, C216-C227, C221-C236, and C238-C247. N-linked (GlcNAc...) asparagine glycosylation occurs at N157. One can recognise an EGF-like 5; calcium-binding domain in the interval 174 to 210 (NVDDCLMRPCANGATCLDGINRFSCLCPEGFAGRFCT). Residues 212-248 (NLDDCASRPCQRGARCRDRVHDFDCLCPSGYGGKTCE) form the EGF-like 6; calcium-binding domain. The helical transmembrane segment at 307–327 (LVAVVVFGAVTATLVLSTVLL) threads the bilayer. Residues 328-383 (TLRAWRRGVCPPGPCCYPAPHYAPARQDQECQVSMLPAGLPLPPDLPPEPGKTTAL) are Cytoplasmic-facing.

Its subcellular location is the membrane. Functionally, regulates adipogenesis. The chain is Protein delta homolog 2 (DLK2) from Sus scrofa (Pig).